A 282-amino-acid chain; its full sequence is MRIRLDLDYDGTDFHGWARQGDSDLRTVQKVLEDNLGMVLRAPVELTVAGRTDAGVHAAGQVAHFDIPRESLQQRSIDGDPTKLVRRLSRLLPEDIRVHGVNYAPEGFDARFSALRRHYVYRITTHPAGPLPTRVRDTAAWPKPVDIQAMQTAADVLIGLHDFVAFCKAKPNASTVRELQEFTWHDVSTPTEPQLYEAHVVADAFCWSMVRSLVGSCMAVGEGRRAGDFTAQLLTATERSPDVPVAPAKGLSLVGVDYPDDDQLRARAEETRAVRGALPGAP.

D53 (nucleophile) is an active-site residue. Substrate is bound at residue Y119.

It belongs to the tRNA pseudouridine synthase TruA family. As to quaternary structure, homodimer.

It carries out the reaction uridine(38/39/40) in tRNA = pseudouridine(38/39/40) in tRNA. Its function is as follows. Formation of pseudouridine at positions 38, 39 and 40 in the anticodon stem and loop of transfer RNAs. The sequence is that of tRNA pseudouridine synthase A from Corynebacterium efficiens (strain DSM 44549 / YS-314 / AJ 12310 / JCM 11189 / NBRC 100395).